The following is a 201-amino-acid chain: Putative toxin HigB2 (201 aa).

The protein belongs to the mycobacterial HigB family.

In terms of biological role, putative toxic component of a type II toxin-antitoxin (TA) system. Its cognate antitoxin would be HigA2. This chain is Putative toxin HigB2, found in Mycobacterium tuberculosis (strain ATCC 25618 / H37Rv).